The primary structure comprises 47 residues: Short transmembrane mitochondrial protein 1 (47 aa).

A helical membrane pass occupies residues 7–23 (GFTLGNVVGMYLAQNYD).

This sequence belongs to the STMP1 family. Interacts with components of the ubiquinol-cytochrome c oxidoreductase (cytochrome b-c1 complex, complex III, CIII), such as UQCRC1/QCR1, UQCRC2/QCR2 and UQCR10/QCR9. Interacts with components of the cytochrome c oxidase (mitochondrial respiratory chain complex IV) complex, such as MT-CO2. As to expression, expressed in monocytes and dendritic cells.

The protein localises to the mitochondrion inner membrane. It localises to the mitochondrion outer membrane. The protein resides in the mitochondrion intermembrane space. Functionally, microprotein involved in mitochondrial respiratory chain complex III (ubiquinol-cytochrome c oxidoreductase) and complex IV (mitochondrial cytochrome c oxidase complex) assembly. Required for the formation of mitochondrial supercomplexes (SCs). Also required for the activation of the NLRP3 inflammasome. The sequence is that of Short transmembrane mitochondrial protein 1 from Homo sapiens (Human).